Consider the following 338-residue polypeptide: (2Z,6E)-hedycaryol synthase (338 aa).

Mg(2+) contacts are provided by Asp-82 and Glu-87. A DDXXXE motif motif is present at residues 82–87; that stretch reads DDQIDE. A substrate-binding site is contributed by Arg-175. The Mg(2+) site is built by Asn-221 and Ser-225. The NXXXSXXXE motif motif lies at 221 to 229; the sequence is NDVFSVERE. Position 228 (Arg-228) interacts with substrate. Glu-229 serves as a coordination point for Mg(2+).

This sequence belongs to the terpene synthase family. As to quaternary structure, homodimer. Requires Mg(2+) as cofactor.

It catalyses the reaction (2E,6E)-farnesyl diphosphate + H2O = (2Z,6E)-hedycaryol + diphosphate. Its pathway is secondary metabolite biosynthesis; terpenoid biosynthesis. Its function is as follows. Catalyzes the conversion of (2E,6E)-farnesyl diphosphate (FPP) into (2Z,6E)-hedycaryol via a 1,11-cyclization. The protein is (2Z,6E)-hedycaryol synthase of Kitasatospora setae (strain ATCC 33774 / DSM 43861 / JCM 3304 / KCC A-0304 / NBRC 14216 / KM-6054) (Streptomyces setae).